The following is a 573-amino-acid chain: Excitatory amino acid transporter 2 (573 aa).

Residues 1–11 (MASTEGANNMP) are compositionally biased toward polar residues. A disordered region spans residues 1-29 (MASTEGANNMPKQVEVRMHDSHLSSEEPK). At 1–44 (MASTEGANNMPKQVEVRMHDSHLSSEEPKHRNLGMRMCDKLGKN) the chain is on the cytoplasmic side. 4 positions are modified to phosphoserine: S3, S21, S24, and S25. The segment covering 14–29 (VEVRMHDSHLSSEEPK) has biased composition (basic and acidic residues). Residue C38 is the site of S-palmitoyl cysteine attachment. The next 3 helical transmembrane spans lie at 45–64 (LLLS…GGLL), 88–108 (MLKM…LSGL), and 121–142 (MVYY…VLAI). 2 N-linked (GlcNAc...) asparagine glycosylation sites follow: N205 and N215. 3 consecutive transmembrane segments (helical) span residues 235-258 (FKDG…MGKM), 268-295 (FFNI…ACLI), and 317-338 (ITVI…YFVV). Positions 344 to 374 (FSFFAGIFQAWITALGTASSAGTLPVTFRCL) form an intramembrane region, discontinuously helical. 361–363 (ASS) is a binding site for L-aspartate. Residues 384 to 410 (VTRFVLPVGATINMDGTALYEAVAAIF) traverse the membrane as a helical segment. Na(+) contacts are provided by G392, T394, and N396. Residues T400, 441–445 (IPSAG), D474, and N481 each bind L-aspartate. The segment at residues 424 to 457 (IVTVSLTATLASIGAASIPSAGLVTMLLILTAVG) is an intramembrane region (discontinuously helical). Residues 471–492 (WLLDRMRTSVNVVGDSFGAGIV) form a helical membrane-spanning segment. Positions 481 and 485 each coordinate Na(+). Residues S505, S520, S531, and S533 each carry the phosphoserine modification. Y538 is subject to Phosphotyrosine. S543, S559, and S563 each carry phosphoserine.

Belongs to the dicarboxylate/amino acid:cation symporter (DAACS) (TC 2.A.23) family. SLC1A2 subfamily. In terms of assembly, homotrimer. Interacts with AJUBA. Glycosylated. Post-translationally, palmitoylation at Cys-38 is not required for correct subcellular localization, but is important for glutamate uptake activity. As to expression, localized in brain and is highly enriched in the Purkinje cell layer in cerebellum.

It is found in the cell membrane. It catalyses the reaction K(+)(in) + L-glutamate(out) + 3 Na(+)(out) + H(+)(out) = K(+)(out) + L-glutamate(in) + 3 Na(+)(in) + H(+)(in). The catalysed reaction is D-aspartate(out) + K(+)(in) + 3 Na(+)(out) + H(+)(out) = D-aspartate(in) + K(+)(out) + 3 Na(+)(in) + H(+)(in). The enzyme catalyses K(+)(in) + L-aspartate(out) + 3 Na(+)(out) + H(+)(out) = K(+)(out) + L-aspartate(in) + 3 Na(+)(in) + H(+)(in). Functionally, sodium-dependent, high-affinity amino acid transporter that mediates the uptake of L-glutamate and also L-aspartate and D-aspartate. Functions as a symporter that transports one amino acid molecule together with two or three Na(+) ions and one proton, in parallel with the counter-transport of one K(+) ion. Mediates Cl(-) flux that is not coupled to amino acid transport; this avoids the accumulation of negative charges due to aspartate and Na(+) symport. Essential for the rapid removal of released glutamate from the synaptic cleft, and for terminating the postsynaptic action of glutamate. This is Excitatory amino acid transporter 2 (Slc1a2) from Rattus norvegicus (Rat).